Reading from the N-terminus, the 431-residue chain is Adenylosuccinate synthetase (431 aa).

Residues 13-19 (GDEGKGK) and 41-43 (GHT) each bind GTP. Catalysis depends on Asp14, which acts as the Proton acceptor. The Mg(2+) site is built by Asp14 and Gly41. IMP contacts are provided by residues 14–17 (DEGK), 39–42 (NAGH), Thr130, Arg144, Gln225, Thr240, and Arg304. The Proton donor role is filled by His42. 300–306 (ATTGRKR) is a binding site for substrate. GTP is bound by residues Arg306, 332 to 334 (KLD), and 415 to 417 (STG).

It belongs to the adenylosuccinate synthetase family. As to quaternary structure, homodimer. Mg(2+) serves as cofactor.

It is found in the cytoplasm. The enzyme catalyses IMP + L-aspartate + GTP = N(6)-(1,2-dicarboxyethyl)-AMP + GDP + phosphate + 2 H(+). Its pathway is purine metabolism; AMP biosynthesis via de novo pathway; AMP from IMP: step 1/2. Its function is as follows. Plays an important role in the de novo pathway of purine nucleotide biosynthesis. Catalyzes the first committed step in the biosynthesis of AMP from IMP. This chain is Adenylosuccinate synthetase, found in Shewanella loihica (strain ATCC BAA-1088 / PV-4).